The primary structure comprises 256 residues: Small ribosomal subunit protein eS1 (256 aa).

Over residues 1–18 (MAVGKNKRLSKGKKGLKK) the composition is skewed to basic residues. The interval 1–20 (MAVGKNKRLSKGKKGLKKRT) is disordered. Alanine 2 is modified (N-acetylalanine; partial).

This sequence belongs to the eukaryotic ribosomal protein eS1 family. As to quaternary structure, component of the small ribosomal subunit. Mature ribosomes consist of a small (40S) and a large (60S) subunit. The 40S subunit contains about 33 different proteins and 1 molecule of RNA (18S). The 60S subunit contains about 49 different proteins and 3 molecules of RNA (25S, 5.8S and 5S).

It is found in the cytoplasm. This is Small ribosomal subunit protein eS1 (rps1) from Talaromyces stipitatus (strain ATCC 10500 / CBS 375.48 / QM 6759 / NRRL 1006) (Penicillium stipitatum).